The chain runs to 258 residues: L-aminoadipate-semialdehyde dehydrogenase-phosphopantetheinyl transferase (258 aa).

This sequence belongs to the P-Pant transferase superfamily. AcpS family.

It is found in the cytoplasm. The protein resides in the nucleus. It catalyses the reaction apo-[ACP] + CoA = holo-[ACP] + adenosine 3',5'-bisphosphate + H(+). Its function is as follows. Catalyzes the transfer of a 4'-phosphopantetheine moiety from coenzyme A to a serine residue of acceptor proteins, such as alpha-aminoadipate reductase. Necessary for alpha-aminoadipate reductase activity. In Schizosaccharomyces pombe (strain 972 / ATCC 24843) (Fission yeast), this protein is L-aminoadipate-semialdehyde dehydrogenase-phosphopantetheinyl transferase (lys7).